Consider the following 107-residue polypeptide: Ig kappa chain V-VI region XRPC 24 (107 aa).

The framework-1 stretch occupies residues 1–23 (EIVLTQSPAITAASLGQKVTITC). C23 and C87 are disulfide-bonded. A complementarity-determining-1 region spans residues 24–33 (SASSSVSYMH). Residues 34-48 (WYQQKSGTSPKPWIY) form a framework-2 region. The tract at residues 49 to 55 (EISKLAS) is complementarity-determining-2. The tract at residues 56–87 (GVPARFSGSGSGTSYSLTISSMEAEDAAIYYC) is framework-3. The interval 88–96 (QQWNYPLIT) is complementarity-determining-3. The interval 97 to 106 (FGSGTKLEIK) is framework-4.

The sequence is that of Ig kappa chain V-VI region XRPC 24 from Mus musculus (Mouse).